A 1729-amino-acid polypeptide reads, in one-letter code: Zinc finger CCCH domain-containing protein 13 (1729 aa).

2 disordered regions span residues 1 to 40 (MSKI…TTET) and 57 to 156 (CRFI…NGDI). Residues 10-23 (VENTKTISESTSRR) are compositionally biased toward polar residues. Residues 36–64 (STTETQCRNWLKTGSCLYGNTCRFIHGPS) form a C3H1-type zinc finger. A phosphoserine mark is found at Ser64 and Ser77. Residues 76-136 (RSPERPTGDL…IKIVKERTPE (61 aa)) show a composition bias toward basic and acidic residues. The stretch at 162–196 (HELSLEMKRQKIQRELMKLEQENMDKREEIIIQKE) forms a coiled coil. Lys179 is covalently cross-linked (Glycyl lysine isopeptide (Lys-Gly) (interchain with G-Cter in SUMO2)). Residues 182–193 (QENMDKREEIII) are compositionally biased toward basic and acidic residues. Disordered regions lie at residues 182–528 (QENM…IRDV) and 581–1527 (DVYQ…PISD). Phosphoserine occurs at positions 198, 207, 209, and 211. The span at 204–213 (SKLSPSPSLR) shows a compositional bias: low complexity. The segment covering 214–224 (KSSKSPKRKSS) has biased composition (basic residues). Ser242 carries the phosphoserine modification. Residues 245 to 254 (LDQQRNSKGN) show a composition bias toward polar residues. At Thr263 the chain carries Phosphothreonine. Position 265 is a phosphoserine (Ser265). A compositionally biased stretch (basic and acidic residues) spans 283–315 (KYKVKDRIEEKPRDGKDRGRDFEKQREKRDKPR). 4 positions are modified to phosphoserine: Ser316, Ser318, Ser324, and Ser327. Over residues 321-345 (QHHSPLSSRHHSSSSQSGSSIQRHS) the composition is skewed to low complexity. Thr353 and Thr363 each carry phosphothreonine. The span at 358-368 (YQRTLTPSLRR) shows a compositional bias: polar residues. Phosphoserine occurs at positions 369, 371, and 380. 2 stretches are compositionally biased toward basic and acidic residues: residues 393–528 (PMRE…IRDV) and 581–636 (DVYQ…EKGS). Residues 639 to 654 (TRGSQMDSHSSGSNYH) are compositionally biased toward polar residues. Over residues 655–701 (DSWETRSSYPERDRYPERDTRDPARDSSFERRHGERDRRDNRERDQR) the composition is skewed to basic and acidic residues. A Phosphoserine modification is found at Ser704. Positions 706–865 (IRHQGRSEEL…KERERQREWE (160 aa)) form a coiled coil. Residues 710 to 897 (GRSEELERDE…IPRDSHEERK (188 aa)) are compositionally biased toward basic and acidic residues. A phosphoserine mark is found at Ser907, Ser909, Ser913, Ser921, Ser924, Ser929, Ser949, Ser951, and Ser953. The span at 920–938 (HSPDSDTYHSGDDKNEKHR) shows a compositional bias: basic and acidic residues. Residues 957–1035 (LTEDRQGRWK…GSDRAHDEKK (79 aa)) are compositionally biased toward basic and acidic residues. Thr958 is modified (phosphothreonine). Positions 1036–1046 (KAKAPKKPVKK) are enriched in basic residues. Residues 1047–1065 (KKEEDVGVERGNLETHEDS) are compositionally biased toward basic and acidic residues. Phosphoserine is present on residues Ser1069, Ser1086, Ser1090, and Ser1093. Basic residues predominate over residues 1072-1086 (KGQKKKNIEKKRKRS). At Thr1109 the chain carries Phosphothreonine. 2 stretches are compositionally biased toward basic and acidic residues: residues 1114–1137 (IKEE…KKEN) and 1149–1159 (PDRTEGLEAEH). 2 stretches are compositionally biased toward low complexity: residues 1160–1176 (TAAT…LSSL) and 1184–1218 (AAAS…TNGS). Over residues 1228–1253 (ARGEKVEVSHVTLEDTPHRKLVDQKR) the composition is skewed to basic and acidic residues. Phosphoserine occurs at positions 1256, 1259, 1273, and 1275. Residues 1278-1288 (SAHRSGDDQGS) show a composition bias toward basic and acidic residues. Residue Ser1295 is modified to Phosphoserine. Composition is skewed to basic and acidic residues over residues 1296-1351 (GSRD…DRQV) and 1359-1440 (DSRD…ERTF). Phosphoserine occurs at positions 1427, 1443, 1447, 1467, 1470, 1499, and 1526. Basic and acidic residues-rich tracts occupy residues 1447–1482 (SGKR…DRDL) and 1490–1499 (DVSKAERTES).

The protein belongs to the ZC3H13 family. As to quaternary structure, component of the WMM complex, a N6-methyltransferase complex composed of a catalytic subcomplex, named MAC, and of an associated subcomplex, named MACOM. The MAC subcomplex is composed of METTL3 and METTL14. The MACOM subcomplex is composed of WTAP, ZC3H13, CBLL1/HAKAI, VIRMA, and, in some cases of RBM15 (RBM15 or RBM15B). Also a component of a MACOM-like complex, named WTAP complex, composed of WTAP, ZC3H13, CBLL1/HAKAI, VIRMA, RBM15, BCLAF1 and THRAP3.

The protein resides in the nucleus speckle. It localises to the nucleus. It is found in the nucleoplasm. In terms of biological role, associated component of the WMM complex, a complex that mediates N6-methyladenosine (m6A) methylation of RNAs, a modification that plays a role in the efficiency of mRNA splicing and RNA processing. Acts as a key regulator of m6A methylation by promoting m6A methylation of mRNAs at the 3'-UTR. Controls embryonic stem cells (ESCs) pluripotency via its role in m6A methylation. In the WMM complex, anchors component of the MACOM subcomplex in the nucleus. Also required for bridging WTAP to the RNA-binding component RBM15 (RBM15 or RBM15B). The sequence is that of Zinc finger CCCH domain-containing protein 13 from Mus musculus (Mouse).